The sequence spans 620 residues: Glutathione-regulated potassium-efflux system protein KefC (620 aa).

12 helical membrane-spanning segments follow: residues 4–24 (HTLI…PIAV), 26–46 (LGLG…PWGL), 54–74 (SILH…GLEL), 90–110 (GALQ…LLGL), 114–134 (VAEL…MQAM), 149–169 (FAVL…IPLL), 178–198 (MGAF…VVLL), 218–238 (VFSA…EEVG), 270–290 (GLLL…GTLL), 294–314 (LRIV…LWLI), 327–347 (WFAV…GAAQ), and 359–379 (SLTL…VILN). Residues 399 to 518 (QPRVIIAGFG…AGVEKPERET (120 aa)) form the RCK N-terminal domain. The interval 597–620 (GWQGTEEGKHTGNMADEPETKPSS) is disordered.

It belongs to the monovalent cation:proton antiporter 2 (CPA2) transporter (TC 2.A.37) family. KefC subfamily. As to quaternary structure, homodimer. Interacts with the regulatory subunit KefF.

The protein localises to the cell inner membrane. Functionally, pore-forming subunit of a potassium efflux system that confers protection against electrophiles. Catalyzes K(+)/H(+) antiport. This chain is Glutathione-regulated potassium-efflux system protein KefC, found in Escherichia coli O127:H6 (strain E2348/69 / EPEC).